Consider the following 257-residue polypeptide: Thiazole synthase (257 aa).

The active-site Schiff-base intermediate with DXP is lysine 98. 1-deoxy-D-xylulose 5-phosphate-binding positions include glycine 159, 185–186 (AG), and 207–208 (NT).

This sequence belongs to the ThiG family. Homotetramer. Forms heterodimers with either ThiH or ThiS.

Its subcellular location is the cytoplasm. The enzyme catalyses [ThiS sulfur-carrier protein]-C-terminal-Gly-aminoethanethioate + 2-iminoacetate + 1-deoxy-D-xylulose 5-phosphate = [ThiS sulfur-carrier protein]-C-terminal Gly-Gly + 2-[(2R,5Z)-2-carboxy-4-methylthiazol-5(2H)-ylidene]ethyl phosphate + 2 H2O + H(+). The protein operates within cofactor biosynthesis; thiamine diphosphate biosynthesis. Functionally, catalyzes the rearrangement of 1-deoxy-D-xylulose 5-phosphate (DXP) to produce the thiazole phosphate moiety of thiamine. Sulfur is provided by the thiocarboxylate moiety of the carrier protein ThiS. In vitro, sulfur can be provided by H(2)S. The chain is Thiazole synthase from Anaeromyxobacter sp. (strain Fw109-5).